Reading from the N-terminus, the 477-residue chain is E3 ubiquitin-protein ligase TRIM17 (477 aa).

Residues 16–66 (CSICLDYFTDPVMTACGHNFCRECIQMSWEKGKGKKGKKKQKGSFPCPECR) form an RING-type zinc finger. The B box-type zinc finger occupies 94 to 135 (HKRDLCQIHQEPLKLFCQDDQTPICVVCREAQEHRMHRVLPL). Cys99, His102, Cys121, and His127 together coordinate Zn(2+). The stretch at 135–225 (LDEAAREYKL…GKLQDSKASL (91 aa)) forms a coiled coil. Residues 276-475 (AIKTVCRVPG…MVISTVTMWV (200 aa)) enclose the B30.2/SPRY domain.

This sequence belongs to the TRIM/RBCC family. As to quaternary structure, interacts (via coiled coil) with TRIM44 (via coiled coil). Interacts with TRIM28; this interaction prevents TRIM28 activity on BCL2A1. Interacts with TRIM41; this interaction prevents TRIM41 activity on ZSCAN2. Interacts with BECN1. Interacts with NFATC3 and NFATC4; these interactions prevent NFATC3 and NFATC4 nuclear localization. Auto-ubiquitinated. In terms of tissue distribution, expressed almost exclusively in the testis.

It localises to the cytoplasm. The protein localises to the lysosome. The enzyme catalyses S-ubiquitinyl-[E2 ubiquitin-conjugating enzyme]-L-cysteine + [acceptor protein]-L-lysine = [E2 ubiquitin-conjugating enzyme]-L-cysteine + N(6)-ubiquitinyl-[acceptor protein]-L-lysine.. It functions in the pathway protein modification; protein ubiquitination. In terms of biological role, E3 ubiquitin ligase that plays important roles in the regulation of neuronal apoptosis, selective autophagy or cell proliferation. Stimulates the degradation of kinetochore ZW10 interacting protein ZWINT in a proteasome-dependent manner, leading to negative regulation of cell proliferation. Inhibits autophagic degradation of diverse known targets while contributing to autophagy of midbodies. Autophagy-inhibitory activity involves MCL1, which TRIM17 assembles into complexes with the key autophagy regulator BECN1. Controls neuronal apoptosis by mediating ubiquitination and degradation of MCL1 to initiate neuronal death. In addition, regulates NFAT transcription factors NFATC3 and NFATC4 activities by preventing their nuclear localization, thus inhibiting their transcriptional activities. Decreases TRIM41-mediated degradation of ZSCAN2 thereby stimulating alpha-synuclein/SNCA transcription in neuronal cells. Prevents the E3 ubiquitin-ligase activity of TRIM28 and its interaction with anti-apoptotic BCL2A1, blocking TRIM28 from ubiquitinating BCL2A1. The sequence is that of E3 ubiquitin-protein ligase TRIM17 (Trim17) from Rattus norvegicus (Rat).